Consider the following 167-residue polypeptide: Signal peptidase complex catalytic subunit SEC11 (167 aa).

At 1-9 (MNLRFELQK) the chain is on the cytoplasmic side. A helical; Signal-anchor for type II membrane protein transmembrane segment spans residues 10–30 (LLNVCFLFASAYMFWQGLAIA). Residues 31 to 167 (TNSASPIVVV…LGLSALLGGE (137 aa)) lie on the Lumenal side of the membrane. Active-site charge relay system residues include serine 44, histidine 83, and aspartate 109. N-linked (GlcNAc...) asparagine glycosylation is present at asparagine 121. The tract at residues 153-164 (ALLGMLGLSALL) is C-terminal short (CTS) helix.

This sequence belongs to the peptidase S26B family. In terms of assembly, component of the signal peptidase complex (SPC) composed of a catalytic subunit SEC11 and three accessory subunits SPC1, SPC2 and SPC3. The complex induces a local thinning of the ER membrane which is used to measure the length of the signal peptide (SP) h-region of protein substrates. This ensures the selectivity of the complex towards h-regions shorter than 18-20 amino acids. SPC associates with the translocon complex.

Its subcellular location is the endoplasmic reticulum membrane. It catalyses the reaction Cleavage of hydrophobic, N-terminal signal or leader sequences from secreted and periplasmic proteins.. Catalytic component of the signal peptidase complex (SPC) which catalyzes the cleavage of N-terminal signal sequences from nascent proteins as they are translocated into the lumen of the endoplasmic reticulum. Specifically cleaves N-terminal signal peptides that contain a hydrophobic alpha-helix (h-region) shorter than 18-20 amino acids. The protein is Signal peptidase complex catalytic subunit SEC11 (SEC11) of Saccharomyces cerevisiae (strain Lalvin QA23) (Baker's yeast).